The chain runs to 165 residues: Methyl-coenzyme M reductase II operon protein D (165 aa).

In terms of assembly, MCR is composed of three subunits: alpha, beta, and gamma. The function of protein D is not known.

This Methanothermus fervidus (strain ATCC 43054 / DSM 2088 / JCM 10308 / V24 S) protein is Methyl-coenzyme M reductase II operon protein D (mrtD).